The primary structure comprises 534 residues: Peptide chain release factor 3 (534 aa).

The region spanning 9 to 278 is the tr-type G domain; the sequence is ARRRTFAIIS…FFIEHAPPPQ (270 aa). Residues 18–25, 86–90, and 140–143 each bind GTP; these read SHPDAGKT, DTPGH, and NKLD.

The protein belongs to the TRAFAC class translation factor GTPase superfamily. Classic translation factor GTPase family. PrfC subfamily.

The protein resides in the cytoplasm. Increases the formation of ribosomal termination complexes and stimulates activities of RF-1 and RF-2. It binds guanine nucleotides and has strong preference for UGA stop codons. It may interact directly with the ribosome. The stimulation of RF-1 and RF-2 is significantly reduced by GTP and GDP, but not by GMP. The sequence is that of Peptide chain release factor 3 from Xanthomonas oryzae pv. oryzae (strain MAFF 311018).